A 63-amino-acid chain; its full sequence is Conotoxin TxMRCL-D012 (63 aa).

A signal peptide spans 1 to 19 (MRCLPVFVILLLLIASTPS). A propeptide spanning residues 20–47 (DTVPLKTKDDMPQASFHGNARRTLQMLS) is cleaved from the precursor. Pyrrolidone carboxylic acid is present on Gln50.

The protein belongs to the conotoxin T superfamily. In terms of processing, contains 2 disulfide bonds that can be either 'C1-C3, C2-C4' or 'C1-C4, C2-C3', since these disulfide connectivities have been observed for conotoxins with cysteine framework V (for examples, see AC P0DQQ7 and AC P81755). Expressed by the venom duct.

The protein resides in the secreted. This is Conotoxin TxMRCL-D012 from Conus textile (Cloth-of-gold cone).